Consider the following 161-residue polypeptide: Phosphopantetheine adenylyltransferase (161 aa).

Residue Thr10 participates in substrate binding. Residues 10–11 (TF) and His18 each bind ATP. 3 residues coordinate substrate: Lys42, Leu74, and Arg88. ATP contacts are provided by residues 89-91 (GIR), Glu99, and 124-130 (WRYLSST).

Belongs to the bacterial CoaD family. As to quaternary structure, homohexamer. Mg(2+) serves as cofactor.

The protein resides in the cytoplasm. It catalyses the reaction (R)-4'-phosphopantetheine + ATP + H(+) = 3'-dephospho-CoA + diphosphate. The protein operates within cofactor biosynthesis; coenzyme A biosynthesis; CoA from (R)-pantothenate: step 4/5. Its function is as follows. Reversibly transfers an adenylyl group from ATP to 4'-phosphopantetheine, yielding dephospho-CoA (dPCoA) and pyrophosphate. In Haemophilus ducreyi (strain 35000HP / ATCC 700724), this protein is Phosphopantetheine adenylyltransferase.